The chain runs to 437 residues: Histidine--tRNA ligase (437 aa).

It belongs to the class-II aminoacyl-tRNA synthetase family. In terms of assembly, homodimer.

The protein resides in the cytoplasm. It catalyses the reaction tRNA(His) + L-histidine + ATP = L-histidyl-tRNA(His) + AMP + diphosphate + H(+). The chain is Histidine--tRNA ligase from Leptospira biflexa serovar Patoc (strain Patoc 1 / Ames).